Reading from the N-terminus, the 292-residue chain is Histamine N-methyltransferase (292 aa).

Glutamate 28 is a binding site for substrate. Positions 60, 89, 94, 120, and 142 each coordinate S-adenosyl-L-methionine. Position 283 (asparagine 283) interacts with substrate.

The protein belongs to the class I-like SAM-binding methyltransferase superfamily. HNMT family. As to quaternary structure, monomer. As to expression, expressed in jejunum, brain &gt; lung, spleen, stomach &gt; liver, kidney.

Its subcellular location is the cytoplasm. The catalysed reaction is histamine + S-adenosyl-L-methionine = N(tau)-methylhistamine + S-adenosyl-L-homocysteine + H(+). Functionally, inactivates histamine by N-methylation. Plays an important role in degrading histamine and in regulating the airway response to histamine. This is Histamine N-methyltransferase (HNMT) from Cavia porcellus (Guinea pig).